A 1133-amino-acid polypeptide reads, in one-letter code: MSRYMQRPENALKRANEFIEVGKPARALDTLQEVFRIKKWTYTWSESVIEPIMFKYLDLCVELKKSHIAKEGLFQYRNMFQLVNVGSLENVIRGYLKMAEERTEAAQQQSSQAILDIDDLDNLATPESILMSAVCGEDAQDRSDRTILLPWVKFLWESYCQCLELLKVNSHCENLYHDIAKMAFGFCLKYNRKMEFRKLCEKLRKHLEDISKVSSQTANVSISKPETQQLNLDTRLNQLDCAIQMELWLEAYKAIEDIHGLMTLSKKTPMPKTMALYYQKLAMVFWKAGNQLFHAAALLKLFQLSRDMKKNVTQEEIQRMTSHVLIATLAIPLPSAHPEFDRFIETDKSPLEKAQKLAVLLGLQQPPTRASLLKDVLRLNVLQLAAPQFQNLYKWLEVEFDPLNLCERVQNIIQEITVDENNPYAQYTQALQDVTLVRLVRQVSQVYQSIEFSRFLALAKFSTSFYLERILVDCVRHNDMQITIDHRNHCVHFGTDLSESQREDHPDGPTLQSMPSEQVRSQLVNMSVVLHRAIATINPNRNKAERDRLRAQMVKSYEENMVKEHQRILQRQKKIEDRKEYIERVNLEREEKELRELEEVARQHKLAEQRRLEQENEERERKRYENEVQMIKERNMKEKIDQIKQTAAGQKILKKFDEEDIKKMNAEEIAAKEAEERQKERKAHDNNLKSQEKKIDYFERAKRLEEIPLIEKYLEDKLVQDKQFWEKQEASRIEAAIAERKNAEAVQERLKRMQPDREIFWQKLKGERSNQFAEKLKAFNVALEEERKRRLTERVYERREERRQKWLREKEEERRRAEEEIRKQRQEEERIERERRAEERRIEDEKARLLEEKRRAREEEATKKAEENRQMQAKAREREREREADSWRDRRGGDAPAAAAQPNPAAQEATKPESGWRTAGAREPRGEDAPKKDGVYQPRFRDVRGGGAGGAGGVERRADDQESNKWRHGGDDGGKDDRDGPRRMGGDRPPMRRGGDDRDDRGPIRRGGDDRDDRGPIRRGDRPPMRDGERGVGMRREGGDRERRDGGDRRDFGGNRDRRDDRGGPRRDDRGDRGGDRDSAWRRPAPRGGDDGGNWRTRQDQAKPKDDRREERPKEARNTGPDEDGWTDVKHHR.

Residues 317–498 form the PCI domain; sequence IQRMTSHVLI…HCVHFGTDLS (182 aa). Coiled-coil stretches lie at residues 573-700 and 784-886; these read KKIE…YFER and EEER…EADS. Residues 810–893 show a composition bias toward basic and acidic residues; that stretch reads KEEERRRAEE…ADSWRDRRGG (84 aa). Positions 810 to 1133 are disordered; the sequence is KEEERRRAEE…DGWTDVKHHR (324 aa). Residues 895 to 909 show a composition bias toward low complexity; it reads APAAAAQPNPAAQEA. Composition is skewed to basic and acidic residues over residues 920 to 944, 954 to 1081, and 1097 to 1117; these read GARE…RDVR, VERR…DSAW, and TRQD…KEAR.

Belongs to the eIF-3 subunit A family. As to quaternary structure, component of the eukaryotic translation initiation factor 3 (eIF-3) complex.

The protein localises to the cytoplasm. RNA-binding component of the eukaryotic translation initiation factor 3 (eIF-3) complex, which is involved in protein synthesis of a specialized repertoire of mRNAs and, together with other initiation factors, stimulates binding of mRNA and methionyl-tRNAi to the 40S ribosome. The eIF-3 complex specifically targets and initiates translation of a subset of mRNAs involved in cell proliferation. This is Eukaryotic translation initiation factor 3 subunit A from Aedes aegypti (Yellowfever mosquito).